The chain runs to 199 residues: ATP-dependent Clp protease proteolytic subunit 2 (199 aa).

Ser98 acts as the Nucleophile in catalysis. Residue His123 is part of the active site.

The protein belongs to the peptidase S14 family. In terms of assembly, fourteen ClpP subunits assemble into 2 heptameric rings which stack back to back to give a disk-like structure with a central cavity, resembling the structure of eukaryotic proteasomes.

The protein localises to the cytoplasm. It carries out the reaction Hydrolysis of proteins to small peptides in the presence of ATP and magnesium. alpha-casein is the usual test substrate. In the absence of ATP, only oligopeptides shorter than five residues are hydrolyzed (such as succinyl-Leu-Tyr-|-NHMec, and Leu-Tyr-Leu-|-Tyr-Trp, in which cleavage of the -Tyr-|-Leu- and -Tyr-|-Trp bonds also occurs).. Cleaves peptides in various proteins in a process that requires ATP hydrolysis. Has a chymotrypsin-like activity. Plays a major role in the degradation of misfolded proteins. This chain is ATP-dependent Clp protease proteolytic subunit 2, found in Corynebacterium diphtheriae (strain ATCC 700971 / NCTC 13129 / Biotype gravis).